The sequence spans 153 residues: MSKHNLIENLKKQIEPIVEGLNYELYHIEFVKEGKENYLRIYIDSENGASLEGCEKVSRAVSELLDDIDPIQESYYLEVSSPGIDRVLYTDKHLEKYKGYNIILNLYSPIDKKKKYEGELIDFNENEINIKVEENIVTIPREKISKTTLKGEL.

It belongs to the RimP family.

It localises to the cytoplasm. Functionally, required for maturation of 30S ribosomal subunits. The sequence is that of Ribosome maturation factor RimP from Clostridium botulinum (strain Loch Maree / Type A3).